The chain runs to 381 residues: DNA replication and repair protein RecF (381 aa).

Residue 30–37 participates in ATP binding; sequence GENAQGKT.

The protein belongs to the RecF family.

Its subcellular location is the cytoplasm. In terms of biological role, the RecF protein is involved in DNA metabolism; it is required for DNA replication and normal SOS inducibility. RecF binds preferentially to single-stranded, linear DNA. It also seems to bind ATP. This Lactobacillus delbrueckii subsp. bulgaricus (strain ATCC 11842 / DSM 20081 / BCRC 10696 / JCM 1002 / NBRC 13953 / NCIMB 11778 / NCTC 12712 / WDCM 00102 / Lb 14) protein is DNA replication and repair protein RecF.